The primary structure comprises 498 residues: Excisase C (498 aa).

The Tyr recombinase domain maps to lysine 263 to phenylalanine 446. Residues arginine 306, lysine 336, arginine 401, and histidine 424 contribute to the active site. Tyrosine 433 (O-(3'-phospho-DNA)-tyrosine intermediate) is an active-site residue.

This sequence belongs to the XisA/XisC recombinase family.

Its function is as follows. Essential for DNA excision. Site specific recombinase necessary for the excision of the 10.5 kb hupL element during heterocyst differentiation. In Nostoc sp. (strain PCC 7120 / SAG 25.82 / UTEX 2576), this protein is Excisase C (xisC).